The sequence spans 421 residues: Probable mitochondrial chaperone BCS1-A (421 aa).

Topologically, residues methionine 1 to serine 10 are mitochondrial intermembrane. A helical transmembrane segment spans residues isoleucine 11–phenylalanine 31. Residues lysine 32 to asparagine 421 are Mitochondrial matrix-facing. Glycine 228 to serine 235 contacts ATP.

This sequence belongs to the AAA ATPase family. BCS1 subfamily.

It localises to the mitochondrion inner membrane. The catalysed reaction is ATP + H2O = ADP + phosphate + H(+). Chaperone necessary for the assembly of mitochondrial respiratory chain complex III. This Dictyostelium discoideum (Social amoeba) protein is Probable mitochondrial chaperone BCS1-A (bcs1la).